We begin with the raw amino-acid sequence, 822 residues long: Phenylalanine--tRNA ligase beta subunit (822 aa).

Positions A39–A150 constitute a tRNA-binding domain. Residues D399 to A502 form the B5 domain. 3 residues coordinate Mg(2+): D486, E489, and E490. One can recognise an FDX-ACB domain in the interval S728–R821.

The protein belongs to the phenylalanyl-tRNA synthetase beta subunit family. Type 1 subfamily. In terms of assembly, tetramer of two alpha and two beta subunits. Mg(2+) is required as a cofactor.

It is found in the cytoplasm. The enzyme catalyses tRNA(Phe) + L-phenylalanine + ATP = L-phenylalanyl-tRNA(Phe) + AMP + diphosphate + H(+). This Gluconobacter oxydans (strain 621H) (Gluconobacter suboxydans) protein is Phenylalanine--tRNA ligase beta subunit.